The primary structure comprises 273 residues: MYRDYGEPGPSSGAGSPYGRPAQPPQAQAQTAQQQKFHLVPSIDSSSQELHWMVQPHFLGPTGYPRPLAYPQYSPPQPRPGVIRALGPPPGVRRRPCEQISPEEEERRRVRRERNKLAAAKCRNRRKELTDFLQAETDKLEDEKSGLQREIEELQKQKERLELVLEAHRPICKIPEGDKKDPGGSGSTSGASSPPAPGRPVPCISLSPGPVLEPEALHTPTLMTTPSLTPFTPSLVFTYPSTPEPCSSAHRKSSSSSGDPSSDPLGSPTLLAL.

Disordered stretches follow at residues 1-46 and 60-114; these read MYRD…IDSS and GPTG…RRER. Residues 7–35 are compositionally biased toward low complexity; sequence EPGPSSGAGSPYGRPAQPPQAQAQTAQQQ. One can recognise a bZIP domain in the interval 105-168; sequence EERRRVRRER…ERLELVLEAH (64 aa). The tract at residues 107–127 is basic motif; it reads RRRVRRERNKLAAAKCRNRRK. The leucine-zipper stretch occupies residues 133-161; sequence LQAETDKLEDEKSGLQREIEELQKQKERL. The span at 169 to 182 shows a compositional bias: basic and acidic residues; it reads RPICKIPEGDKKDP. The disordered stretch occupies residues 169 to 273; sequence RPICKIPEGD…PLGSPTLLAL (105 aa). Low complexity-rich tracts occupy residues 217-235 and 254-273; these read LHTPTLMTTPSLTPFTPSL and SSSSGDPSSDPLGSPTLLAL. At serine 267 the chain carries Phosphoserine.

It belongs to the bZIP family. Fos subfamily. Heterodimer. Interacts with the BAF multiprotein chromatin-remodeling complex subunits SMARCB1 and SMARCD1. Interacts with ARID1A and JUN.

Its subcellular location is the nucleus. The sequence is that of Fos-related antigen 1 (Fosl1) from Mus musculus (Mouse).